Here is a 293-residue protein sequence, read N- to C-terminus: Small ribosomal subunit protein uS5 (293 aa).

The interval Met-1–Glu-56 is disordered. Ala-2 carries the N-acetylalanine modification. Positions Ala-7–Arg-34 are enriched in gly residues. The segment covering Gly-35–Arg-51 has biased composition (basic residues). Residues Lys-54 and Lys-58 each participate in a glycyl lysine isopeptide (Lys-Gly) (interchain with G-Cter in ubiquitin) cross-link. An S5 DRBM domain is found at Leu-102–Val-165. Residue Thr-252 is modified to Phosphothreonine. Residue Lys-263 is modified to N6-acetyllysine. Position 264 is a phosphoserine (Ser-264). Thr-270 carries the phosphothreonine modification. The residue at position 275 (Lys-275) is an N6-acetyllysine; alternate. A Glycyl lysine isopeptide (Lys-Gly) (interchain with G-Cter in SUMO1); alternate cross-link involves residue Lys-275. Lys-275 participates in a covalent cross-link: Glycyl lysine isopeptide (Lys-Gly) (interchain with G-Cter in SUMO2); alternate. Residue Lys-275 forms a Glycyl lysine isopeptide (Lys-Gly) (interchain with G-Cter in ubiquitin); alternate linkage. Ser-281 bears the Phosphoserine mark.

This sequence belongs to the universal ribosomal protein uS5 family. As to quaternary structure, component of the small ribosomal subunit. Interacts with zinc finger protein ZNF277 (via zinc-finger domains); the interaction is direct; the interaction is extra-ribosomal. Interaction with ZNF277 competes with the binding of RPS2 to protein arginine methyltransferase PRMT3. Post-translationally, citrullinated by PADI4 in the Arg/Gly-rich region. Asymmetric arginine dimethylation by PRMT3 occurs at multiple sites in the Arg/Gly-rich region. In terms of processing, monoubiquitinated at Lys-54 and Lys-58 by RNF10 when a ribosome has stalled during translation, leading to its degradation by the proteasome. Deubiquitinated at Lys-54 and Lys-58 by USP10, preventing degradation by the proteasome and promoting 40S ribosome subunit recycling following ribosome dissociation.

Its subcellular location is the cytoplasm. The protein resides in the nucleus. It is found in the nucleolus. Its function is as follows. Component of the ribosome, a large ribonucleoprotein complex responsible for the synthesis of proteins in the cell. The small ribosomal subunit (SSU) binds messenger RNAs (mRNAs) and translates the encoded message by selecting cognate aminoacyl-transfer RNA (tRNA) molecules. The large subunit (LSU) contains the ribosomal catalytic site termed the peptidyl transferase center (PTC), which catalyzes the formation of peptide bonds, thereby polymerizing the amino acids delivered by tRNAs into a polypeptide chain. The nascent polypeptides leave the ribosome through a tunnel in the LSU and interact with protein factors that function in enzymatic processing, targeting, and the membrane insertion of nascent chains at the exit of the ribosomal tunnel. Plays a role in the assembly and function of the 40S ribosomal subunit. Mutations in this protein affects the control of translational fidelity. Involved in nucleolar processing of pre-18S ribosomal RNA and ribosome assembly. The sequence is that of Small ribosomal subunit protein uS5 (RPS2) from Homo sapiens (Human).